Consider the following 548-residue polypeptide: Probable malate:quinone oxidoreductase (548 aa).

A disordered region spans residues 522–548; it reads KPQAADSTPKAQLKPQPARKEVADIAL. Basic and acidic residues predominate over residues 539–548; sequence ARKEVADIAL.

Belongs to the MQO family. FAD serves as cofactor.

It carries out the reaction (S)-malate + a quinone = a quinol + oxaloacetate. Its pathway is carbohydrate metabolism; tricarboxylic acid cycle; oxaloacetate from (S)-malate (quinone route): step 1/1. The protein is Probable malate:quinone oxidoreductase of Escherichia fergusonii (strain ATCC 35469 / DSM 13698 / CCUG 18766 / IAM 14443 / JCM 21226 / LMG 7866 / NBRC 102419 / NCTC 12128 / CDC 0568-73).